A 239-amino-acid chain; its full sequence is Tumor protein p53-inducible nuclear protein 1 (239 aa).

An LIR motif is present at residues 25–37 (EKEDDEWILVDFI).

In terms of assembly, interacts with p53/TP53 and HIPK2. Interacts with PRKCG, GABARAP, GABARAPL1, GABARAPL2, MAP1LC3A, MAP1LC3B and MAP1LC3C. As to expression, ubiquitously expressed with highest levels in the thymus.

The protein resides in the cytoplasm. The protein localises to the cytosol. It localises to the nucleus. It is found in the PML body. Its subcellular location is the cytoplasmic vesicle. The protein resides in the autophagosome. In terms of biological role, antiproliferative and proapoptotic protein involved in cell stress response which acts as a dual regulator of transcription and autophagy. Acts as a positive regulator of autophagy. In response to cellular stress or activation of autophagy, relocates to autophagosomes where it interacts with autophagosome-associated proteins GABARAP, GABARAPL1/L2, MAP1LC3A/B/C and regulates autophagy. Acts as an antioxidant and plays a major role in p53/TP53-driven oxidative stress response. Possesses both a p53/TP53-independent intracellular reactive oxygen species (ROS) regulatory function and a p53/TP53-dependent transcription regulatory function. Positively regulates p53/TP53 and p73/TP73 and stimulates their capacity to induce apoptosis and regulate cell cycle. In response to double-strand DNA breaks, promotes p53/TP53 phosphorylation on 'Ser-46' and subsequent apoptosis. Acts as a tumor suppressor by inducing cell death by an autophagy and caspase-dependent mechanism. Can reduce cell migration by regulating the expression of SPARC. The chain is Tumor protein p53-inducible nuclear protein 1 (Trp53inp1) from Mus musculus (Mouse).